The sequence spans 134 residues: MDFQTIQVMPWEYVLASQSLNNYQENHVRWSQSPDSHTFSVDLPGLRKEEIKVEIEDSIYLIIRTEATPMSPPDQPLKTFKRKFRLPESIDMIGISAGYEDGVLTVIVPKRIMTRRLIDPSDVPESLQLLARAA.

In terms of domain architecture, sHSP spans Ser-19 to Ser-126.

The protein belongs to the small heat shock protein (HSP20) family. May form oligomeric structures.

The protein resides in the cytoplasm. This Arabidopsis thaliana (Mouse-ear cress) protein is 15.4 kDa class V heat shock protein (HSP15.4).